The primary structure comprises 334 residues: Cobalt-precorrin-5B C(1)-methyltransferase (334 aa).

It belongs to the CbiD family.

It catalyses the reaction Co-precorrin-5B + S-adenosyl-L-methionine = Co-precorrin-6A + S-adenosyl-L-homocysteine. Its pathway is cofactor biosynthesis; adenosylcobalamin biosynthesis; cob(II)yrinate a,c-diamide from sirohydrochlorin (anaerobic route): step 6/10. Functionally, catalyzes the methylation of C-1 in cobalt-precorrin-5B to form cobalt-precorrin-6A. The sequence is that of Cobalt-precorrin-5B C(1)-methyltransferase from Methanoregula boonei (strain DSM 21154 / JCM 14090 / 6A8).